We begin with the raw amino-acid sequence, 259 residues long: Thiazole synthase (259 aa).

Catalysis depends on Lys-95, which acts as the Schiff-base intermediate with DXP. Residues Gly-156, 182–183, and 204–205 each bind 1-deoxy-D-xylulose 5-phosphate; these read AG and AS.

Belongs to the ThiG family. Homotetramer. Forms heterodimers with either ThiH or ThiS.

Its subcellular location is the cytoplasm. It catalyses the reaction [ThiS sulfur-carrier protein]-C-terminal-Gly-aminoethanethioate + 2-iminoacetate + 1-deoxy-D-xylulose 5-phosphate = [ThiS sulfur-carrier protein]-C-terminal Gly-Gly + 2-[(2R,5Z)-2-carboxy-4-methylthiazol-5(2H)-ylidene]ethyl phosphate + 2 H2O + H(+). It functions in the pathway cofactor biosynthesis; thiamine diphosphate biosynthesis. Its function is as follows. Catalyzes the rearrangement of 1-deoxy-D-xylulose 5-phosphate (DXP) to produce the thiazole phosphate moiety of thiamine. Sulfur is provided by the thiocarboxylate moiety of the carrier protein ThiS. In vitro, sulfur can be provided by H(2)S. This chain is Thiazole synthase, found in Corynebacterium efficiens (strain DSM 44549 / YS-314 / AJ 12310 / JCM 11189 / NBRC 100395).